The chain runs to 459 residues: uncharacterized protein (459 aa).

The interval 28 to 47 is disordered; it reads AHDEELTGPPQKPAYAAKPA. The region spanning 35–214 is the FAD-binding PCMH-type domain; that stretch reads GPPQKPAYAA…TEVIVKLHPR (180 aa).

Belongs to the oxygen-dependent FAD-linked oxidoreductase family. The cofactor is FAD.

This is an uncharacterized protein from Mycobacterium tuberculosis (strain CDC 1551 / Oshkosh).